We begin with the raw amino-acid sequence, 923 residues long: Mitochondrial 10-formyltetrahydrofolate dehydrogenase (923 aa).

The N-terminal 19 residues, 1–19 (MLRRGSQALRRFSTGRVYF), are a transit peptide targeting the mitochondrion; not cleaved. A hydrolase domain region spans residues 23-331 (LKLALIGQSL…PASQYFSTGE (309 aa)). Ser31 carries the post-translational modification Phosphoserine. An N6-succinyllysine modification is found at Lys60. Residue 110–112 (QFI) coordinates (6R)-10-formyltetrahydrofolate. The Proton donor role is filled by His128. Asp164 lines the (6R)-10-formyltetrahydrofolate pocket. Residues 339 to 416 (AEEVKVAETI…GFIQKVVRKL (78 aa)) enclose the Carrier domain. Ser375 carries the O-(pantetheine 4'-phosphoryl)serine modification. Residues 438–923 (MVKMPYQCFI…LKTKTVTLEY (486 aa)) are aldehyde dehydrogenase domain. NADP(+)-binding positions include 592–594 (IPW) and 618–621 (KPAQ). Ser650 bears the Phosphoserine mark. Residues 651–656 (GGIAGQ) and 671–672 (GS) each bind NADP(+). N6-succinyllysine is present on Lys681. Glu694 (proton acceptor) is an active-site residue. Residue 694-695 (EL) participates in NADP(+) binding. Residue Cys728 is the Proton donor of the active site. Lys778 lines the NADP(+) pocket. The residue at position 788 (Lys788) is an N6-succinyllysine. 825–827 (ESF) lines the NADP(+) pocket. N6-acetyllysine is present on Lys903.

This sequence in the N-terminal section; belongs to the GART family. In the C-terminal section; belongs to the aldehyde dehydrogenase family. ALDH1L subfamily. Post-translationally, phosphopantetheinylation at Ser-375 by AASDHPPT is required for the formyltetrahydrofolate dehydrogenase activity. Highly expressed in pancreas, heart, brain and skeletal muscle.

The protein localises to the mitochondrion. It catalyses the reaction (6R)-10-formyltetrahydrofolate + NADP(+) + H2O = (6S)-5,6,7,8-tetrahydrofolate + CO2 + NADPH + H(+). In terms of biological role, mitochondrial 10-formyltetrahydrofolate dehydrogenase that catalyzes the NADP(+)-dependent conversion of 10-formyltetrahydrofolate to tetrahydrofolate and carbon dioxide. This is Mitochondrial 10-formyltetrahydrofolate dehydrogenase from Homo sapiens (Human).